Here is a 235-residue protein sequence, read N- to C-terminus: Cytochrome c-554 (235 aa).

The first 24 residues, 1–24, serve as a signal peptide directing secretion; it reads MKIMIACGLVAAALFTLTSGQSLA. The heme site is built by cysteine 35, cysteine 38, histidine 39, histidine 51, cysteine 84, cysteine 87, histidine 88, cysteine 112, cysteine 115, histidine 116, histidine 126, cysteine 158, cysteine 161, histidine 162, and histidine 203. A disordered region spans residues 121–144; the sequence is NFRGDHRKSGQAFEKSGKKTPRKD.

Post-translationally, binds 4 heme groups per subunit.

The protein resides in the periplasm. Its function is as follows. Involved in ammonia oxidation; accepts electrons directly from hydroxylamine oxidoreductase (HAO). This Nitrosomonas europaea (strain ATCC 19718 / CIP 103999 / KCTC 2705 / NBRC 14298) protein is Cytochrome c-554 (cycA1).